We begin with the raw amino-acid sequence, 415 residues long: MTEQSAHEKYEFKKKLESLRDKKGRSTELISLYIPADKQIFDVTNQLKDEHGQAANIKSKLTRTNVQGAIESLLSRLRYLDKVPENGIVYFTGAVDIGANKTSMESEVIIPPEPITVYKYHCDSSFYLEPLEDMLKDKSTFGLLVLDRREATIGLLVGKRIQAFRNLTSTVPGKQRKGGQSAHRFQQLRLIAIHDFYKRIGDAASEIFMAVDHKDLKGVLIGGPSPTKEEFYGGEFLHHELQKKILGLFDTAYTDESGLSELVNAAGEKLQDLELMGQKNAVRDFFKELIADSGKVAYGETQVRANLEINAVDVLLLSEDLRAERVTTKCSVCGYENKWTRRWKPGEPAPTAGNCPKCGSSLEVTDVIDVVDEFSELADKSNAKVVFVSTDFDEGSQLMNAFGGIAAILRYSTGV.

The protein belongs to the eukaryotic release factor 1 family. Heterodimer of two subunits, one of which binds GTP.

Its subcellular location is the cytoplasm. Its function is as follows. Directs the termination of nascent peptide synthesis (translation) in response to the termination codons UAA, UAG and UGA. This Methanosarcina acetivorans (strain ATCC 35395 / DSM 2834 / JCM 12185 / C2A) protein is Peptide chain release factor subunit 1-1.